We begin with the raw amino-acid sequence, 241 residues long: MVKDTLFSTPIAKLGDFIFDENVAEVFPDMIQRSVPGYSNIITAIGMLAERFVTADSNVYDLGCSRGAATLSARRNIHQPNVKIIGIDNSQPMVERCCQHIAAYHSEIPVEILCNDIRHVEIKNASMVILNFTLQFLPPEDRVALLIKIYEGLNPNGVLVLSEKFRFEDTKVNHLLIDLHHQFKRANGYSELEVSQKRTALENVMRTDSIETHKVRLKNIGFSQVELWFQCFNFGSMIAVK.

Residues tyrosine 38, 63-65 (GCS), 88-89 (DN), 116-117 (DI), asparagine 131, and arginine 198 each bind S-adenosyl-L-methionine.

Belongs to the class I-like SAM-binding methyltransferase superfamily. Cx-SAM synthase family. As to quaternary structure, homodimer.

The catalysed reaction is prephenate + S-adenosyl-L-methionine = carboxy-S-adenosyl-L-methionine + 3-phenylpyruvate + H2O. Its function is as follows. Catalyzes the conversion of S-adenosyl-L-methionine (SAM) to carboxy-S-adenosyl-L-methionine (Cx-SAM). This is Carboxy-S-adenosyl-L-methionine synthase from Haemophilus influenzae (strain PittEE).